The chain runs to 292 residues: ATP synthase gamma chain (292 aa).

The protein belongs to the ATPase gamma chain family. In terms of assembly, F-type ATPases have 2 components, CF(1) - the catalytic core - and CF(0) - the membrane proton channel. CF(1) has five subunits: alpha(3), beta(3), gamma(1), delta(1), epsilon(1). CF(0) has three main subunits: a, b and c.

The protein localises to the cell inner membrane. In terms of biological role, produces ATP from ADP in the presence of a proton gradient across the membrane. The gamma chain is believed to be important in regulating ATPase activity and the flow of protons through the CF(0) complex. The chain is ATP synthase gamma chain from Methylobacterium nodulans (strain LMG 21967 / CNCM I-2342 / ORS 2060).